An 82-amino-acid polypeptide reads, in one-letter code: Small ribosomal subunit protein bS16 (82 aa).

The protein belongs to the bacterial ribosomal protein bS16 family.

This is Small ribosomal subunit protein bS16 from Deinococcus deserti (strain DSM 17065 / CIP 109153 / LMG 22923 / VCD115).